The chain runs to 244 residues: 1-(5-phosphoribosyl)-5-[(5-phosphoribosylamino)methylideneamino] imidazole-4-carboxamide isomerase (244 aa).

Asp10 (proton acceptor) is an active-site residue. The active-site Proton donor is the Asp129.

Belongs to the HisA/HisF family.

The protein localises to the cytoplasm. It catalyses the reaction 1-(5-phospho-beta-D-ribosyl)-5-[(5-phospho-beta-D-ribosylamino)methylideneamino]imidazole-4-carboxamide = 5-[(5-phospho-1-deoxy-D-ribulos-1-ylimino)methylamino]-1-(5-phospho-beta-D-ribosyl)imidazole-4-carboxamide. The protein operates within amino-acid biosynthesis; L-histidine biosynthesis; L-histidine from 5-phospho-alpha-D-ribose 1-diphosphate: step 4/9. The polypeptide is 1-(5-phosphoribosyl)-5-[(5-phosphoribosylamino)methylideneamino] imidazole-4-carboxamide isomerase (Rhodococcus opacus (strain B4)).